A 458-amino-acid chain; its full sequence is MGRLFGTDGVRGLANGSLSPELALRVSGAAAQVLGRGKTRALALVGRDPRASGEMLEAAVTAGLTAAGVNVLSVGVLPTPAVAYLTGLYDACLGVMISASHNPMPDNGIKIFAAGGHKLDDAVEDRIEALVAADDPVRPTGAGIGRVLNASGARDHGLHIPDQYSVEGTHERYVEHLVEATGRDLSGLTVVVDCANGAAAEVGPAAYREAGATVIAINAEPDGLNINDGCGSTHLDQVRRAVVEHGADLGLAHDGDADRCLAVAADGSVVDGDAILAVLAIAMKESGELAQDTLVATVMSNLGLHLAMRAAGIAVRTTAVGDRYVLEELRAGGYTLGGEQSGHVVFPKYGTTGDGVLTGLKLMARMAQTGRSLADLAGVLTTVPQVLVNVPVSDKAAVAAAPDVREAVADAERELGDSGRILLRPSGTEQLVRVMVEATDPVKAEQLAADLAKLVASL.

The Phosphoserine intermediate role is filled by serine 100. Positions 100, 254, 256, and 258 each coordinate Mg(2+). Serine 100 bears the Phosphoserine mark.

It belongs to the phosphohexose mutase family. The cofactor is Mg(2+). Post-translationally, activated by phosphorylation.

It catalyses the reaction alpha-D-glucosamine 1-phosphate = D-glucosamine 6-phosphate. Functionally, catalyzes the conversion of glucosamine-6-phosphate to glucosamine-1-phosphate. This Nocardia farcinica (strain IFM 10152) protein is Phosphoglucosamine mutase.